The primary structure comprises 388 residues: Succinate--CoA ligase [ADP-forming] subunit beta (388 aa).

One can recognise an ATP-grasp domain in the interval 9–245 (KELLAGYGLP…KSQENERELK (237 aa)). ATP contacts are provided by residues Lys-46, 53–55 (GRG), Glu-100, Tyr-103, and Glu-108. Residues Asn-200 and Asp-214 each coordinate Mg(2+). Substrate-binding positions include Asn-265 and 322 to 324 (GIV).

The protein belongs to the succinate/malate CoA ligase beta subunit family. Heterotetramer of two alpha and two beta subunits. It depends on Mg(2+) as a cofactor.

It catalyses the reaction succinate + ATP + CoA = succinyl-CoA + ADP + phosphate. The catalysed reaction is GTP + succinate + CoA = succinyl-CoA + GDP + phosphate. The protein operates within carbohydrate metabolism; tricarboxylic acid cycle; succinate from succinyl-CoA (ligase route): step 1/1. In terms of biological role, succinyl-CoA synthetase functions in the citric acid cycle (TCA), coupling the hydrolysis of succinyl-CoA to the synthesis of either ATP or GTP and thus represents the only step of substrate-level phosphorylation in the TCA. The beta subunit provides nucleotide specificity of the enzyme and binds the substrate succinate, while the binding sites for coenzyme A and phosphate are found in the alpha subunit. This is Succinate--CoA ligase [ADP-forming] subunit beta from Neisseria meningitidis serogroup C / serotype 2a (strain ATCC 700532 / DSM 15464 / FAM18).